The sequence spans 153 residues: Troponin C (153 aa).

Alanine 1 carries the post-translational modification Blocked amino end (Ala). 4 consecutive EF-hand domains span residues 10–45 (EQVQ…LGQT), 46–81 (FEEK…FLVE), 86–121 (AMQE…LDDK), and 122–153 (LTED…MMTG). Ca(2+)-binding residues include aspartate 59, aspartate 61, serine 63, glutamate 65, glutamate 70, aspartate 99, aspartate 110, aspartate 135, aspartate 137, serine 139, threonine 141, and glutamate 146.

It belongs to the troponin C family.

In terms of biological role, troponin is the central regulatory protein of striated muscle contraction. Tn consists of three components: Tn-I which is the inhibitor of actomyosin ATPase, Tn-T which contains the binding site for tropomyosin and Tn-C. The binding of calcium to Tn-C abolishes the inhibitory action of Tn on actin filaments. The polypeptide is Troponin C (Tachypleus tridentatus (Japanese horseshoe crab)).